A 208-amino-acid polypeptide reads, in one-letter code: Thiamine-phosphate synthase (208 aa).

4-amino-2-methyl-5-(diphosphooxymethyl)pyrimidine is bound by residues 37-41 and asparagine 73; that span reads QYREK. Mg(2+) contacts are provided by aspartate 74 and aspartate 93. Serine 112 serves as a coordination point for 4-amino-2-methyl-5-(diphosphooxymethyl)pyrimidine. 139–141 contacts 2-[(2R,5Z)-2-carboxy-4-methylthiazol-5(2H)-ylidene]ethyl phosphate; sequence TIS. Lysine 142 provides a ligand contact to 4-amino-2-methyl-5-(diphosphooxymethyl)pyrimidine. Residues glycine 171 and 191–192 each bind 2-[(2R,5Z)-2-carboxy-4-methylthiazol-5(2H)-ylidene]ethyl phosphate; that span reads IS.

This sequence belongs to the thiamine-phosphate synthase family. Requires Mg(2+) as cofactor.

The enzyme catalyses 2-[(2R,5Z)-2-carboxy-4-methylthiazol-5(2H)-ylidene]ethyl phosphate + 4-amino-2-methyl-5-(diphosphooxymethyl)pyrimidine + 2 H(+) = thiamine phosphate + CO2 + diphosphate. It catalyses the reaction 2-(2-carboxy-4-methylthiazol-5-yl)ethyl phosphate + 4-amino-2-methyl-5-(diphosphooxymethyl)pyrimidine + 2 H(+) = thiamine phosphate + CO2 + diphosphate. It carries out the reaction 4-methyl-5-(2-phosphooxyethyl)-thiazole + 4-amino-2-methyl-5-(diphosphooxymethyl)pyrimidine + H(+) = thiamine phosphate + diphosphate. It participates in cofactor biosynthesis; thiamine diphosphate biosynthesis; thiamine phosphate from 4-amino-2-methyl-5-diphosphomethylpyrimidine and 4-methyl-5-(2-phosphoethyl)-thiazole: step 1/1. Condenses 4-methyl-5-(beta-hydroxyethyl)thiazole monophosphate (THZ-P) and 2-methyl-4-amino-5-hydroxymethyl pyrimidine pyrophosphate (HMP-PP) to form thiamine monophosphate (TMP). This chain is Thiamine-phosphate synthase, found in Listeria welshimeri serovar 6b (strain ATCC 35897 / DSM 20650 / CCUG 15529 / CIP 8149 / NCTC 11857 / SLCC 5334 / V8).